A 68-amino-acid chain; its full sequence is Large ribosomal subunit protein bL31 (68 aa).

Zn(2+)-binding residues include Cys16, Cys18, Cys37, and Cys40.

Belongs to the bacterial ribosomal protein bL31 family. Type A subfamily. As to quaternary structure, part of the 50S ribosomal subunit. The cofactor is Zn(2+).

Binds the 23S rRNA. In Acidithiobacillus ferrooxidans (strain ATCC 23270 / DSM 14882 / CIP 104768 / NCIMB 8455) (Ferrobacillus ferrooxidans (strain ATCC 23270)), this protein is Large ribosomal subunit protein bL31.